The sequence spans 279 residues: Four and a half LIM domains protein 2 (279 aa).

The segment at 7–31 (CHHCEDSLFGRKYVLREEQPYCVAC) adopts a C4-type zinc-finger fold. LIM zinc-binding domains follow at residues 40-92 (CEEC…CTDC), 101-153 (CQEC…CVPC), and 162-212 (CVQC…CLGC). Lys-78 participates in a covalent cross-link: Glycyl lysine isopeptide (Lys-Gly) (interchain with G-Cter in SUMO2). Glycyl lysine isopeptide (Lys-Gly) (interchain with G-Cter in SUMO2) cross-links involve residues Lys-167 and Lys-220. An LIM zinc-binding 4 domain is found at 221-275 (CAGCANPISGLGGTKYISFEERQWHNDCFNCKKCSLSLVGRGFLTERDDILCPDC). Ser-238 bears the Phosphoserine mark.

As to quaternary structure, interacts with ZNF638 and TTN/titin. Interacts with E4F1. Interacts with GRB7. Interacts with SIRT1 and FOXO1. Interacts with CEFIP and calcineurin. Interacts with FOXK1.

The protein localises to the cytoplasm. It localises to the nucleus. It is found in the myofibril. Its subcellular location is the sarcomere. The protein resides in the z line. May function as a molecular transmitter linking various signaling pathways to transcriptional regulation. Negatively regulates the transcriptional repressor E4F1 and may function in cell growth. Inhibits the transcriptional activity of FOXO1 and its apoptotic function by enhancing the interaction of FOXO1 with SIRT1 and FOXO1 deacetylation. Negatively regulates the calcineurin/NFAT signaling pathway in cardiomyocytes. The polypeptide is Four and a half LIM domains protein 2 (FHL2) (Bos taurus (Bovine)).